The sequence spans 312 residues: Glycerol-3-phosphate dehydrogenase [NAD(P)+] (312 aa).

Residues tryptophan 11, arginine 30, arginine 31, and lysine 95 each contribute to the NADPH site. Sn-glycerol 3-phosphate contacts are provided by lysine 95, glycine 123, and serine 125. Alanine 127 lines the NADPH pocket. Sn-glycerol 3-phosphate is bound by residues lysine 177, aspartate 230, serine 240, arginine 241, and asparagine 242. Lysine 177 serves as the catalytic Proton acceptor. Arginine 241 contacts NADPH. NADPH contacts are provided by valine 265 and glutamate 267.

This sequence belongs to the NAD-dependent glycerol-3-phosphate dehydrogenase family.

It localises to the cytoplasm. The enzyme catalyses sn-glycerol 3-phosphate + NAD(+) = dihydroxyacetone phosphate + NADH + H(+). It carries out the reaction sn-glycerol 3-phosphate + NADP(+) = dihydroxyacetone phosphate + NADPH + H(+). It functions in the pathway membrane lipid metabolism; glycerophospholipid metabolism. Catalyzes the reduction of the glycolytic intermediate dihydroxyacetone phosphate (DHAP) to sn-glycerol 3-phosphate (G3P), the key precursor for phospholipid synthesis. This is Glycerol-3-phosphate dehydrogenase [NAD(P)+] from Helicobacter pylori (strain Shi470).